The following is a 778-amino-acid chain: Transcription factor kayak (778 aa).

Low complexity-rich tracts occupy residues 24–54 and 77–98; these read AQQL…HTQQ and QYYQ…QRQL. 6 disordered regions span residues 24-57, 76-130, 183-223, 294-320, 356-414, and 427-478; these read AQQL…QNGL, NQYY…HQLR, QPTA…TTNG, APLV…VLAS, ASVM…GTGG, and RNTN…RKRR. Polar residues predominate over residues 99–108; the sequence is PTQQPAASYE. Low complexity-rich tracts occupy residues 109-130 and 183-222; these read QQQQ…HQLR and QPTA…TTTN. The segment covering 382–402 has biased composition (low complexity); sequence ISDTSSGATDSTSYQNGHMMG. The span at 403 to 414 shows a compositional bias: gly residues; the sequence is NSGGGNGGGTGG. Residues 427–436 are compositionally biased toward polar residues; sequence RNTNTSNSAT. Positions 457-520 constitute a bZIP domain; it reads EEKRRIRRER…NQLEYFLQAH (64 aa). The interval 459–478 is basic motif; it reads KRRIRRERNKQAAARCRKRR. Residues 485–513 form a leucine-zipper region; that stretch reads LTEEVELLEKRGENLKKEMELLNETKNQL. Residues 550–571 are compositionally biased toward low complexity; that stretch reads GSCGSGSSHHNNNSNSNDSSSG. Disordered stretches follow at residues 550–594 and 756–778; these read GSCG…DLKP and TSQN…LVSL. Residues 579–589 show a composition bias toward polar residues; that stretch reads TLNSTGRSNSP. Phosphoserine is present on serine 588.

The protein belongs to the bZIP family. Fos subfamily. In terms of assembly, homodimer. Heterodimer with Jra. The kay-Jra heterodimer binds more stably to the AP-1 site than either of the two proteins alone.

The protein localises to the nucleus. Developmentally regulated transcription factor AP-1 binds and recognizes the enhancer DNA sequence: 5'-TGA[CG]TCA-3'. May play a role in the function or determination of a particular subset of cells in the developing embryo. It is able to carry out its function either independently of or in conjunction with Jra. This is Transcription factor kayak from Drosophila pseudoobscura pseudoobscura (Fruit fly).